A 352-amino-acid polypeptide reads, in one-letter code: tRNA N6-adenosine threonylcarbamoyltransferase (352 aa).

A divalent metal cation is bound by residues His-114, His-118, and Tyr-135. Residues 135–139, Asp-167, Gly-182, Glu-186, and Asn-283 each bind substrate; that span reads YVSGG. An a divalent metal cation-binding site is contributed by Asp-311.

The protein belongs to the KAE1 / TsaD family. As to quaternary structure, component of the EKC/KEOPS complex composed of at least BUD32, CGI121, GON7, KAE1 and PCC1; the whole complex dimerizes. It depends on a divalent metal cation as a cofactor.

It is found in the cytoplasm. The protein resides in the nucleus. The catalysed reaction is L-threonylcarbamoyladenylate + adenosine(37) in tRNA = N(6)-L-threonylcarbamoyladenosine(37) in tRNA + AMP + H(+). Its function is as follows. Component of the EKC/KEOPS complex that is required for the formation of a threonylcarbamoyl group on adenosine at position 37 (t(6)A37) in tRNAs that read codons beginning with adenine. The complex is probably involved in the transfer of the threonylcarbamoyl moiety of threonylcarbamoyl-AMP (TC-AMP) to the N6 group of A37. KAE1 likely plays a direct catalytic role in this reaction, but requires other protein(s) of the complex to fulfill this activity. The EKC/KEOPS complex also promotes both telomere uncapping and telomere elongation. The complex is required for efficient recruitment of transcriptional coactivators. This Phaeosphaeria nodorum (strain SN15 / ATCC MYA-4574 / FGSC 10173) (Glume blotch fungus) protein is tRNA N6-adenosine threonylcarbamoyltransferase.